The following is a 164-amino-acid chain: HTH-type transcriptional regulator IscR (164 aa).

The 130-residue stretch at 2 to 131 (RLTSKGRYAV…GSISLEELVK (130 aa)) folds into the HTH rrf2-type domain. The segment at residues 28-51 (LADISERQGISLSYLEQLFSRLRK) is a DNA-binding region (H-T-H motif). Cysteine 92, cysteine 98, and cysteine 104 together coordinate [2Fe-2S] cluster. A disordered region spans residues 140-164 (DRQDSDKRRTPNGRPQETINVNLRA). A compositionally biased stretch (polar residues) spans 152–164 (GRPQETINVNLRA).

[2Fe-2S] cluster serves as cofactor.

Regulates the transcription of several operons and genes involved in the biogenesis of Fe-S clusters and Fe-S-containing proteins. This chain is HTH-type transcriptional regulator IscR, found in Xenorhabdus nematophila (strain ATCC 19061 / DSM 3370 / CCUG 14189 / LMG 1036 / NCIMB 9965 / AN6).